A 437-amino-acid chain; its full sequence is 3-phosphoshikimate 1-carboxyvinyltransferase (437 aa).

Residues Lys22, Ser23, and Arg27 each contribute to the 3-phosphoshikimate site. Lys22 contributes to the phosphoenolpyruvate binding site. Positions 94 and 122 each coordinate phosphoenolpyruvate. 3-phosphoshikimate is bound by residues Ser167, Gln169, Asp314, and Lys341. Position 169 (Gln169) interacts with phosphoenolpyruvate. Asp314 (proton acceptor) is an active-site residue. Phosphoenolpyruvate is bound by residues Arg345 and Arg389.

It belongs to the EPSP synthase family. In terms of assembly, monomer.

Its subcellular location is the cytoplasm. It catalyses the reaction 3-phosphoshikimate + phosphoenolpyruvate = 5-O-(1-carboxyvinyl)-3-phosphoshikimate + phosphate. It functions in the pathway metabolic intermediate biosynthesis; chorismate biosynthesis; chorismate from D-erythrose 4-phosphate and phosphoenolpyruvate: step 6/7. Functionally, catalyzes the transfer of the enolpyruvyl moiety of phosphoenolpyruvate (PEP) to the 5-hydroxyl of shikimate-3-phosphate (S3P) to produce enolpyruvyl shikimate-3-phosphate and inorganic phosphate. This Oenococcus oeni (strain ATCC BAA-331 / PSU-1) protein is 3-phosphoshikimate 1-carboxyvinyltransferase.